We begin with the raw amino-acid sequence, 425 residues long: tRNA(Ile)-lysidine synthase (425 aa).

27–32 (SGGLDS) lines the ATP pocket.

Belongs to the tRNA(Ile)-lysidine synthase family.

Its subcellular location is the cytoplasm. It carries out the reaction cytidine(34) in tRNA(Ile2) + L-lysine + ATP = lysidine(34) in tRNA(Ile2) + AMP + diphosphate + H(+). Functionally, ligates lysine onto the cytidine present at position 34 of the AUA codon-specific tRNA(Ile) that contains the anticodon CAU, in an ATP-dependent manner. Cytidine is converted to lysidine, thus changing the amino acid specificity of the tRNA from methionine to isoleucine. The protein is tRNA(Ile)-lysidine synthase of Streptococcus pneumoniae (strain P1031).